Reading from the N-terminus, the 445-residue chain is Cholesterol side-chain cleavage enzyme, mitochondrial (445 aa).

Residues 1–36 constitute a mitochondrion transit peptide; it reads RGLPSRSVFLRGCQASLSTAQERLGHPGVPTREGVR.

It belongs to the cytochrome P450 family. As to quaternary structure, interacts with FDX1/adrenodoxin. Heme serves as cofactor.

It is found in the mitochondrion inner membrane. It catalyses the reaction 6 reduced [adrenodoxin] + cholesterol + 3 O2 + 6 H(+) = 4-methylpentanal + pregnenolone + 6 oxidized [adrenodoxin] + 4 H2O. It carries out the reaction 2 reduced [adrenodoxin] + cholesterol + O2 + 2 H(+) = (22R)-hydroxycholesterol + 2 oxidized [adrenodoxin] + H2O. The enzyme catalyses (22R)-hydroxycholesterol + 2 reduced [adrenodoxin] + O2 + 2 H(+) = (20R,22R)-20,22-dihydroxycholesterol + 2 oxidized [adrenodoxin] + H2O. The catalysed reaction is (20R,22R)-20,22-dihydroxycholesterol + 2 reduced [adrenodoxin] + O2 + 2 H(+) = 4-methylpentanal + pregnenolone + 2 oxidized [adrenodoxin] + 2 H2O. The protein operates within lipid metabolism; C21-steroid hormone metabolism. It functions in the pathway steroid metabolism; cholesterol metabolism. Its function is as follows. A cytochrome P450 monooxygenase that catalyzes the side-chain hydroxylation and cleavage of cholesterol to pregnenolone, the precursor of most steroid hormones. Catalyzes three sequential oxidation reactions of cholesterol, namely the hydroxylation at C22 followed with the hydroxylation at C20 to yield 20R,22R-hydroxycholesterol that is further cleaved between C20 and C22 to yield the C21-steroid pregnenolone and 4-methylpentanal. Mechanistically, uses molecular oxygen inserting one oxygen atom into a substrate and reducing the second into a water molecule. Two electrons are provided by NADPH via a two-protein mitochondrial transfer system comprising flavoprotein FDXR (adrenodoxin/ferredoxin reductase) and nonheme iron-sulfur protein FDX1 or FDX2 (adrenodoxin/ferredoxin). The sequence is that of Cholesterol side-chain cleavage enzyme, mitochondrial (CYP11A1) from Oryctolagus cuniculus (Rabbit).